Here is a 443-residue protein sequence, read N- to C-terminus: Ribosomal protein uS12 methylthiotransferase RimO (443 aa).

An MTTase N-terminal domain is found at 5-115 (PNIGFISLGC…VMQHVHKYVP (111 aa)). Residues Cys14, Cys50, Cys79, Cys147, Cys151, and Cys154 each contribute to the [4Fe-4S] cluster site. Residues 133 to 374 (LTPKHYAYLK…MQVQQRISVA (242 aa)) form the Radical SAM core domain. Residues 377-443 (QQKIGKTLAI…ADEYDLWGTY (67 aa)) enclose the TRAM domain.

The protein belongs to the methylthiotransferase family. RimO subfamily. [4Fe-4S] cluster is required as a cofactor.

The protein resides in the cytoplasm. It catalyses the reaction L-aspartate(89)-[ribosomal protein uS12]-hydrogen + (sulfur carrier)-SH + AH2 + 2 S-adenosyl-L-methionine = 3-methylsulfanyl-L-aspartate(89)-[ribosomal protein uS12]-hydrogen + (sulfur carrier)-H + 5'-deoxyadenosine + L-methionine + A + S-adenosyl-L-homocysteine + 2 H(+). In terms of biological role, catalyzes the methylthiolation of an aspartic acid residue of ribosomal protein uS12. The sequence is that of Ribosomal protein uS12 methylthiotransferase RimO from Haemophilus ducreyi (strain 35000HP / ATCC 700724).